The sequence spans 374 residues: UPF0754 membrane protein SAB1779c (374 aa).

2 consecutive transmembrane segments (helical) span residues 4-24 (LFIIIFMIVVGAIIGGITNVI) and 354-374 (SLGFILGGIIGFFQGLVAIFV).

This sequence belongs to the UPF0754 family.

The protein resides in the cell membrane. The sequence is that of UPF0754 membrane protein SAB1779c from Staphylococcus aureus (strain bovine RF122 / ET3-1).